Here is a 77-residue protein sequence, read N- to C-terminus: Oxyopinin-4a (77 aa).

An N-terminal signal peptide occupies residues 1-20; the sequence is MKISQVFIFVFLLMISVAWA. A propeptide spanning residues 21-47 is cleaved from the precursor; it reads NEAYEEESNYLSERFDADVEEITPEFR. A disulfide bridge links Cys51 with Cys57.

As to expression, expressed by the venom gland.

Its subcellular location is the secreted. It localises to the target cell membrane. In terms of biological role, disrupts cell membranes through the formation of pores. Has antibacterial activity against Gram-positive bacteria S.aureus (MIC=10 uM) and B.subtilis (MIC=0.5 uM) as well as Gram-negative bacteria P.fluorescens (MIC=1 uM) and E.coli (MIC=0.5 uM). Has hemolytic activity against human erythrocytes (EC(50)=7 uM). This chain is Oxyopinin-4a, found in Oxyopes takobius (Lynx spider).